A 473-amino-acid polypeptide reads, in one-letter code: Argininosuccinate lyase (473 aa).

2-(N(omega)-L-arginino)succinate-binding residues include serine 34, asparagine 121, and threonine 166. Residue histidine 167 is the Proton acceptor of the active site. Serine 289 (proton donor) is an active-site residue. Asparagine 297, tyrosine 329, and glutamine 334 together coordinate 2-(N(omega)-L-arginino)succinate.

Belongs to the lyase 1 family. Argininosuccinate lyase subfamily.

It carries out the reaction 2-(N(omega)-L-arginino)succinate = fumarate + L-arginine. It participates in amino-acid biosynthesis; L-arginine biosynthesis; L-arginine from L-ornithine and carbamoyl phosphate: step 3/3. The polypeptide is Argininosuccinate lyase (ARG7) (Chlamydomonas reinhardtii (Chlamydomonas smithii)).